The primary structure comprises 549 residues: Chaperonin GroEL (549 aa).

ATP contacts are provided by residues 30 to 33 (TLGP), Lys51, 87 to 91 (DGTTT), Gly415, and Asp496.

The protein belongs to the chaperonin (HSP60) family. As to quaternary structure, forms a cylinder of 14 subunits composed of two heptameric rings stacked back-to-back. Interacts with the co-chaperonin GroES.

The protein resides in the cytoplasm. It carries out the reaction ATP + H2O + a folded polypeptide = ADP + phosphate + an unfolded polypeptide.. In terms of biological role, together with its co-chaperonin GroES, plays an essential role in assisting protein folding. The GroEL-GroES system forms a nano-cage that allows encapsulation of the non-native substrate proteins and provides a physical environment optimized to promote and accelerate protein folding. This Prosthecochloris aestuarii (strain DSM 271 / SK 413) protein is Chaperonin GroEL.